The following is an 883-amino-acid chain: Translation initiation factor IF-2 (883 aa).

Residues 118–261 are disordered; sequence VARESEAAPA…KKKEAFKKTE (144 aa). The segment covering 124–150 has biased composition (low complexity); the sequence is AAPAEEPVAAAVKPASEPPVVQKAPVA. 2 stretches are compositionally biased toward basic and acidic residues: residues 183 to 200 and 252 to 261; these read PADR…EERI and KKKEAFKKTE. The tr-type G domain maps to 383-552; it reads KRPPVVTIMG…LLQADVMDLK (170 aa). A G1 region spans residues 392–399; sequence GHVDHGKT. Position 392-399 (392-399) interacts with GTP; that stretch reads GHVDHGKT. The interval 417-421 is G2; that stretch reads GITQH. The G3 stretch occupies residues 438–441; sequence DTPG. Residues 438–442 and 492–495 contribute to the GTP site; these read DTPGH and NKID. The G4 stretch occupies residues 492–495; that stretch reads NKID. The segment at 528–530 is G5; that stretch reads SAK.

It belongs to the TRAFAC class translation factor GTPase superfamily. Classic translation factor GTPase family. IF-2 subfamily.

The protein resides in the cytoplasm. In terms of biological role, one of the essential components for the initiation of protein synthesis. Protects formylmethionyl-tRNA from spontaneous hydrolysis and promotes its binding to the 30S ribosomal subunits. Also involved in the hydrolysis of GTP during the formation of the 70S ribosomal complex. This Geobacter sulfurreducens (strain ATCC 51573 / DSM 12127 / PCA) protein is Translation initiation factor IF-2.